A 255-amino-acid polypeptide reads, in one-letter code: MKRNFRPKLKKQVDNTKKDTIVLKHEEDKPFGPLRNDYKSDLYIDGKRWNSVDNYVFSNLLPSIDFRKQTIEHLNPHQVEKTYYDVKFEINKSTLSSAIKIGIESKLIADPQFRQALLNTAGSSIMYLSKNNYLGYGNGKWFVNTYGIWLEHFRTGMLWSIARTDKHPTLKDDQIYDSYLAEKGLKLALHYENLDKYLKIDADLQGNGMVEIIKALIKKSGREKIFVLDRETALALQRKRYIEPIVKATQLIRYI.

Belongs to the IIV-6 155L family.

This is an uncharacterized protein from Acheta domesticus (House cricket).